Reading from the N-terminus, the 62-residue chain is Short neurotoxin 3 (62 aa).

4 disulfide bridges follow: C3/C24, C17/C41, C43/C54, and C55/C60.

Belongs to the three-finger toxin family. Short-chain subfamily. Type I alpha-neurotoxin sub-subfamily. As to expression, expressed by the venom gland.

The protein localises to the secreted. Its function is as follows. Binds to muscle nicotinic acetylcholine receptor (nAChR) and inhibit acetylcholine from binding to the receptor, thereby impairing neuromuscular transmission. The polypeptide is Short neurotoxin 3 (Naja mossambica (Mozambique spitting cobra)).